A 261-amino-acid chain; its full sequence is MEINREESDLTKYVKITNDTDLTASGTAQNNDAKIENSRLSIAIGHNALVKDSDTKYTHPKDKTPDNPAASIAVGANANVTESPYSIALGKNAKVLNSEYSLAAGTNAKVEKSEKAIVQGVEANATNSNISIVTDFAAKAENSKDVIVLGSKTESIRSNSTVALGNRTSVTDSDSAFVGGDHASATTSAGALVLGNGAKAKTVSLTADNGVLKAGDKTIFTEDNFKMLLKQLYTFEDGLKTKEKNGKTVVSLDKETIKQMA.

This is an uncharacterized protein from Haemophilus influenzae (strain ATCC 51907 / DSM 11121 / KW20 / Rd).